The following is a 200-amino-acid chain: Protein Mbur_1344 (200 aa).

In terms of domain architecture, AMMECR1 spans 5 to 192 (SEGEQTVRLA…EVEPRGDIEE (188 aa)).

This is Protein Mbur_1344 from Methanococcoides burtonii (strain DSM 6242 / NBRC 107633 / OCM 468 / ACE-M).